Reading from the N-terminus, the 104-residue chain is uncharacterized protein (104 aa).

Belongs to the mimivirus L28/L54 family.

This is an uncharacterized protein from Acanthamoeba polyphaga mimivirus (APMV).